The following is a 681-amino-acid chain: 2-(S-pantetheinyl)-carbapenam-3-carboxylate methyltransferase (681 aa).

Residues 1 to 144 (MTVPAARSGR…IERLADHPDY (144 aa)) form the B12-binding domain. The cob(II)alamin site is built by asparagine 18, serine 72, tyrosine 74, valine 75, histidine 103, glycine 126, and glutamate 127. Positions 192–417 (RDLRFYALWE…RLYVEEPGTP (226 aa)) constitute a Radical SAM core domain. Cysteine 206 and cysteine 210 together coordinate [4Fe-4S] cluster. Phenylalanine 212 is a 5'-deoxyadenosine binding site. A [4Fe-4S] cluster-binding site is contributed by cysteine 213. Residues aspartate 214 and cysteine 249 each coordinate cob(II)alamin. The 5'-deoxyadenosine site is built by glutamine 312, glutamate 349, and glycine 384.

It belongs to the methyltransferase superfamily. [4Fe-4S] cluster serves as cofactor. Cob(II)alamin is required as a cofactor.

The enzyme catalyses (2R,3R,5S)-2-(S-pantetheinyl)-carbapenam-3-carboxylate + AH2 + 2 S-adenosyl-L-methionine = (2R,3R,5S,6R)-6-(methyl)-2-(S-pantetheinyl)-carbapenam-3-carboxylate + 5'-deoxyadenosine + L-methionine + A + S-adenosyl-L-homocysteine + 2 H(+). The catalysed reaction is (2R,3R,5S,6R)-6-(methyl)-2-(S-pantetheinyl)-carbapenam-3-carboxylate + AH2 + 2 S-adenosyl-L-methionine = (2R,3R,5S,6R)-6-(ethyl)-2-(S-pantetheinyl)-carbapenam-3-carboxylate + 5'-deoxyadenosine + L-methionine + A + S-adenosyl-L-homocysteine + 2 H(+). It participates in antibiotic biosynthesis. Methyltransferase involved in the biosynthesis of the beta-lactam carbapenem antibiotic thienamycin. Catalyzes two consecutive S-adenosyl-L-methionine-dependent methylations to build out the C6-ethyl side chain in a stereocontrolled manner. In vitro can use methyl viologen and NADPH as the iron-sulfur cluster reductants. The sequence is that of 2-(S-pantetheinyl)-carbapenam-3-carboxylate methyltransferase from Streptantibioticus cattleyicolor (strain ATCC 35852 / DSM 46488 / JCM 4925 / NBRC 14057 / NRRL 8057) (Streptomyces cattleya).